A 482-amino-acid polypeptide reads, in one-letter code: Putative fatty acid desaturase 2-like protein FADS2B (482 aa).

Residues 1–31 (MKFEEKCGDNGSIVGRNQSYPGEKHQPKGKP) are disordered. The Cytoplasmic segment spans residues 1–167 (MKFEEKCGDN…EAMNMFHANL (167 aa)). Residues 56–132 (LSMYTWLEIQ…LKPLLIGELA (77 aa)) enclose the Cytochrome b5 heme-binding domain. Residues His-90 and His-113 each contribute to the heme site. The helical transmembrane segment at 168–188 (GFFFLHFVQILILEVLAWLIV) threads the bilayer. The Lumenal portion of the chain corresponds to 189–190 (YH). The chain crosses the membrane as a helical span at residues 191–211 (FGSGWPVTMFISFLLTISQAS). Topologically, residues 212–305 (SSFLQHDAGH…YEEQHLYFYK (94 aa)) are cytoplasmic. The Histidine box-1 motif lies at 217–221 (HDAGH). The short motif at 254–258 (HFEQH) is the Histidine box-2 element. Residues 306 to 326 (VWLPLFMPVYLKLPSMQAMYL) traverse the membrane as a helical segment. The Lumenal segment spans residues 327 to 343 (QRYWVCFSLQDITWVSS). The helical transmembrane segment at 344–364 (FYIYFITFGLYYGIFGTMLLI) threads the bilayer. Topologically, residues 365-482 (YLVKFLESPW…AALWADAYYE (118 aa)) are cytoplasmic. The short motif at 421 to 425 (QIEHH) is the Histidine box-3 element.

It belongs to the fatty acid desaturase type 1 family.

It is found in the endoplasmic reticulum membrane. It participates in lipid metabolism; polyunsaturated fatty acid biosynthesis. The polypeptide is Putative fatty acid desaturase 2-like protein FADS2B (Homo sapiens (Human)).